A 352-amino-acid polypeptide reads, in one-letter code: Membrane progestin receptor alpha (352 aa).

Over 1–75 (MATVVMEQIG…FLTLFQRHNE (75 aa)) the chain is Cytoplasmic. The helical transmembrane segment at 76 to 96 (TLNVWTHLLAAFIILVKWQEI) threads the bilayer. Residues 97–110 (SETVDFLRDPHAQP) lie on the Extracellular side of the membrane. A helical transmembrane segment spans residues 111–131 (LFIVLLAAFTYLSFSALAHLL). Residues 132–139 (SAKSELSY) lie on the Cytoplasmic side of the membrane. A helical transmembrane segment spans residues 140–160 (YTFYFLDYVGVAVYQYGSALA). Residues 161-175 (HYYYAIEKEWHTKVQ) are Extracellular-facing. The chain crosses the membrane as a helical span at residues 176–196 (GLFLPAAAFLAWLTCFGCCYG). The Cytoplasmic segment spans residues 197 to 242 (KYASPELPKVANKLFQVVPSALAYCLDISPVVHRIYSCYQEGCSDP). The helical transmembrane segment at 243-263 (VVAYHFYHVVFFLIGAYFFCC) threads the bilayer. Residues 264–275 (PHPESLFPGKCD) are Extracellular-facing. Residues 276–296 (FIGQGHQLFHVFVVVCTLTQV) traverse the membrane as a helical segment. Topologically, residues 297–316 (EALRTDFTERRPFYERLHGD) are cytoplasmic. A helical membrane pass occupies residues 317–337 (LAHDAVALFIFTACCSALTAF). The Extracellular portion of the chain corresponds to 338 to 352 (YVRQRVRASLHEKGE).

It belongs to the ADIPOR family. In terms of tissue distribution, strongly expressed in ovary and brain; lower expression in testis and pituitary. Not detected in heart, kidney, spleen, intestine, gill and muscle.

The protein resides in the cell membrane. In terms of biological role, steroid membrane receptor. Binds progesterone, progestin and 17-hydroxyprogesterone in vitro. Capable of mediating progestin-induced oocyte maturation. This chain is Membrane progestin receptor alpha (mpra), found in Cynoscion nebulosus (Spotted seatrout).